The chain runs to 225 residues: Cytidylate kinase (225 aa).

Residue 12–20 coordinates ATP; that stretch reads GPSGAGKGT.

It belongs to the cytidylate kinase family. Type 1 subfamily.

Its subcellular location is the cytoplasm. The catalysed reaction is CMP + ATP = CDP + ADP. It carries out the reaction dCMP + ATP = dCDP + ADP. This Vibrio cholerae serotype O1 (strain ATCC 39315 / El Tor Inaba N16961) protein is Cytidylate kinase.